The following is a 371-amino-acid chain: Large ribosomal subunit protein bL27m (371 aa).

The transit peptide at 1–27 (MWNPILLDTSSFSFQKHVSGVFLQVRN) directs the protein to the mitochondrion.

This sequence belongs to the bacterial ribosomal protein bL27 family. Component of the mitochondrial large ribosomal subunit (mt-LSU). Mature yeast 74S mitochondrial ribosomes consist of a small (37S) and a large (54S) subunit. The 37S small subunit contains a 15S ribosomal RNA (15S mt-rRNA) and 34 different proteins. The 54S large subunit contains a 21S rRNA (21S mt-rRNA) and 46 different proteins.

Its subcellular location is the mitochondrion. Its function is as follows. Component of the mitochondrial ribosome (mitoribosome), a dedicated translation machinery responsible for the synthesis of mitochondrial genome-encoded proteins, including at least some of the essential transmembrane subunits of the mitochondrial respiratory chain. The mitoribosomes are attached to the mitochondrial inner membrane and translation products are cotranslationally integrated into the membrane. The polypeptide is Large ribosomal subunit protein bL27m (MRP7) (Saccharomyces cerevisiae (strain ATCC 204508 / S288c) (Baker's yeast)).